The sequence spans 348 residues: Phosphoribosylformylglycinamidine cyclo-ligase (348 aa).

The protein belongs to the AIR synthase family.

It is found in the cytoplasm. It catalyses the reaction 2-formamido-N(1)-(5-O-phospho-beta-D-ribosyl)acetamidine + ATP = 5-amino-1-(5-phospho-beta-D-ribosyl)imidazole + ADP + phosphate + H(+). Its pathway is purine metabolism; IMP biosynthesis via de novo pathway; 5-amino-1-(5-phospho-D-ribosyl)imidazole from N(2)-formyl-N(1)-(5-phospho-D-ribosyl)glycinamide: step 2/2. In Geobacter sulfurreducens (strain ATCC 51573 / DSM 12127 / PCA), this protein is Phosphoribosylformylglycinamidine cyclo-ligase.